The chain runs to 310 residues: Ribosomal RNA small subunit methyltransferase H (310 aa).

S-adenosyl-L-methionine-binding positions include Gly-35–His-37, Asp-52, Phe-79, Asp-100, and Gln-107.

This sequence belongs to the methyltransferase superfamily. RsmH family.

Its subcellular location is the cytoplasm. It carries out the reaction cytidine(1402) in 16S rRNA + S-adenosyl-L-methionine = N(4)-methylcytidine(1402) in 16S rRNA + S-adenosyl-L-homocysteine + H(+). Functionally, specifically methylates the N4 position of cytidine in position 1402 (C1402) of 16S rRNA. This is Ribosomal RNA small subunit methyltransferase H from Anaeromyxobacter sp. (strain Fw109-5).